The sequence spans 41 residues: Plantazolicin (41 aa).

A propeptide spanning residues 1–27 is cleaved from the precursor; sequence MTKITIPTALSAKVHGEGQHLFEPMAA. The residue at position 28 (Arg-28) is an N2,N2-dimethylarginine; in form plantazolicin A. The segment at residues 28–29 is a cross-link (thiazole-4-carboxylic acid (Arg-Cys)); that stretch reads RC. 2 consecutive cross-links (5-methyloxazole-4-carboxylic acid (Cys-Thr)) follow at residues 29–30 and 31–32; these read CT. A cross-link (thiazole-4-carboxylic acid (Thr-Cys)) is located at residues 30–31; sequence TC. Positions 32–33 form a cross-link, 5-methyloxazole-4-carboxylic acid (Thr-Thr); sequence TT. Residues 35–36 constitute a cross-link (oxazole-4-carboxylic acid (Ile-Ser)); the sequence is IS. Cross-links (oxazole-4-carboxylic acid (Ser-Ser)) lie at residues 36–37, 37–38, and 38–39; these read SS. A cross-link (5-methyloxazoline-4-carboxylic acid (Ser-Thr)) is located at residues 39 to 40; the sequence is ST.

Maturation of thiazole and oxazole containing antibiotics involves the enzymatic condensation of a Cys, Ser or Thr with the alpha-carbonyl of the preceding amino acid to form a thioether or ether bond, then dehydration to form a double bond with the alpha-amino nitrogen. Thiazoline or oxazoline ring are dehydrogenated to form thiazole or oxazole rings.

The protein resides in the secreted. It is found in the cell wall. Functionally, peptide antibiotic inhibiting growth of Gram-positive bacteria. The mode of action appears to be disruption of cell walls and lysis of cells. In Bacillus pumilus (strain ATCC 7061 / DSM 27 / CCUG 26015 / JCM 2508 / NBRC 12092 / NCIMB 9369 / NCTC 10337 / NRRL NRS-272 / CCM 2144), this protein is Plantazolicin.